Reading from the N-terminus, the 428-residue chain is GTPase Obg (428 aa).

Positions 1 to 158 constitute an Obg domain; sequence MFIDIAKVFI…LSIVLELKLL (158 aa). The OBG-type G domain maps to 159-331; it reads ADVGLLGFPN…VIKEAARMLK (173 aa). GTP is bound by residues 165–172, 190–194, 212–215, 282–285, and 312–314; these read GFPNVGKS, FTTLK, DIPG, NKSD, and SAA. Mg(2+) is bound by residues S172 and T192. The region spanning 345–428 is the OCT domain; the sequence is MYIPEEKKFT…LNDFEFEYLL (84 aa).

It belongs to the TRAFAC class OBG-HflX-like GTPase superfamily. OBG GTPase family. In terms of assembly, monomer. Mg(2+) is required as a cofactor.

It localises to the cytoplasm. Its function is as follows. An essential GTPase which binds GTP, GDP and possibly (p)ppGpp with moderate affinity, with high nucleotide exchange rates and a fairly low GTP hydrolysis rate. Plays a role in control of the cell cycle, stress response, ribosome biogenesis and in those bacteria that undergo differentiation, in morphogenesis control. The chain is GTPase Obg from Clostridium botulinum (strain Alaska E43 / Type E3).